Here is a 381-residue protein sequence, read N- to C-terminus: G-protein coupled receptor homolog Q2/3L (381 aa).

The Extracellular portion of the chain corresponds to 1–91 (MNYTLSTVSS…HCDDGVDTTS (91 aa)). Residues asparagine 2, asparagine 15, asparagine 19, asparagine 41, asparagine 50, asparagine 56, and asparagine 62 are each glycosylated (N-linked (GlcNAc...) asparagine; by host). A helical transmembrane segment spans residues 92–112 (FGLITLYSTIFFLGLFGNIIV). Residues 113-126 (LTVLRKYKIKTIQD) lie on the Cytoplasmic side of the membrane. The chain crosses the membrane as a helical span at residues 127–147 (MFLLNLTLSDLIFVLVFPFNL). The Extracellular portion of the chain corresponds to 148-165 (YDSIAKQWSLGDCLCKFK). The helical transmembrane segment at 166–186 (AMFYFVGFYNSMSFITLMSID) threads the bilayer. Residues 187–206 (RYLAVVHPVKSMPIRTKRYG) are Cytoplasmic-facing. Residues 207–227 (IVLSMVVWIVSTIESFPIMLF) traverse the membrane as a helical segment. Residues 228-251 (YETKKVYGITYCHVFYNDNAKIWK) are Extracellular-facing. Residues 252 to 272 (LFINFEINIFGMIIPLTILLY) form a helical membrane-spanning segment. Residues 273-294 (CYYKILNTLKTSQTKNKKAIKM) lie on the Cytoplasmic side of the membrane. A helical transmembrane segment spans residues 295 to 315 (VFLIVICSVLFLLPFSVTVFV). Topologically, residues 316-336 (SSLYLLNVFSGCMALRFVNLA) are extracellular. The chain crosses the membrane as a helical span at residues 337–357 (VHVAEIVSLCHCFINPLIYAF). Over 358–381 (CSREFTKKLLRLRTTSSAGSISIG) the chain is Cytoplasmic.

Belongs to the G-protein coupled receptor 1 family.

It is found in the host cell membrane. Its function is as follows. Putative chemokine receptor. The protein is G-protein coupled receptor homolog Q2/3L of Ovis aries (Sheep).